A 346-amino-acid polypeptide reads, in one-letter code: fMet-Leu-Phe receptor (346 aa).

N-linked (GlcNAc...) asparagine glycosylation is found at Asn-1 and Asn-7. The Extracellular segment spans residues 1-24 (NSSLPTNISGGTPAVSAGYLFLDI). The helical transmembrane segment at 25–47 (ITYLVFAVTFVLGVLGNGLVIWV) threads the bilayer. Residues 48 to 58 (AGFRMRHTVTT) are Cytoplasmic-facing. A helical membrane pass occupies residues 59–80 (ISYLNLAVADFCFTSTLPFLMV). Over 81–97 (VKVMRGHWPFGWFLCKF) the chain is Extracellular. Cys-95 and Cys-173 form a disulfide bridge. A helical transmembrane segment spans residues 98–118 (IFTIVDINLFGSVFLIALIAL). Residues 119–137 (DRCVCVLHPVWTQNHRTVS) are Cytoplasmic-facing. The chain crosses the membrane as a helical span at residues 138-159 (LAKKVIIGPWVMALLLTLPVII). At 160 to 202 (RVTTVPGKTGTVACTFDFSPWTNDPVEKLKVTIAMLTVRGIIR) the chain is on the extracellular side. Residues 203 to 223 (FIIGFSVPMSIVAVSYGLIAT) traverse the membrane as a helical segment. Topologically, residues 224–239 (KIHKQGLIKSSRPLRV) are cytoplasmic. The chain crosses the membrane as a helical span at residues 240 to 263 (LSFVVAAFFLCWSPYQVVAFIATV). Topologically, residues 264–282 (RLRNILQGLSKELRIAVDA) are extracellular. Residues 283-302 (TSALAFFNSCLNPMLYVFMG) form a helical membrane-spanning segment. The Cytoplasmic portion of the chain corresponds to 303–346 (QDFRERLIHSLPTSLERALTEDSAQTSDTATNSTLPSAEVPLQA). The disordered stretch occupies residues 321 to 346 (LTEDSAQTSDTATNSTLPSAEVPLQA). Positions 324–338 (DSAQTSDTATNSTLP) are enriched in polar residues.

This sequence belongs to the G-protein coupled receptor 1 family. In terms of processing, phosphorylated; which is necessary for desensitization.

The protein resides in the cell membrane. Functionally, high affinity receptor for N-formyl-methionyl peptides (fMLP), which are powerful neutrophil chemotactic factors. Binding of fMLP to the receptor stimulates intracellular calcium mobilization and superoxide anion release. This response is mediated via a G-protein that activates a phosphatidylinositol-calcium second messenger system. Receptor for TAFA4, mediates its effects on chemoattracting macrophages, promoting phagocytosis and increasing ROS release. Receptor for cathepsin CTSG, leading to increased phagocyte chemotaxis. This Macaca mulatta (Rhesus macaque) protein is fMet-Leu-Phe receptor (FPR1).